Here is a 289-residue protein sequence, read N- to C-terminus: MFKGVYPAIITPFKNKEVDFDGLEENINFLIENGVSGIVAVGTTGESPTLSHEEHKKVIEKVVDVVNGRVQVIAGAGSNCTEEAIELSVFAEDVGADAVLSITPYYNKPTQEGLRKHFGKVAESINLPIVLYNVPSRTAVNLEPKTVKLLAEEYSNISAVKEANPNLSQVSELIHDAKITVLSGNDELTLPIIALGGKGVISVVANIVPKEFVEMVNYALEGDFEKAREIHYKLFPLMKAMFIETNPIPVKTALNMMGRPAGELRLPLCEMSEEHKKILENVLKDLGLI.

Threonine 44 serves as a coordination point for pyruvate. Tyrosine 132 serves as the catalytic Proton donor/acceptor. Residue lysine 161 is the Schiff-base intermediate with substrate of the active site. Isoleucine 201 contacts pyruvate.

It belongs to the DapA family. In terms of assembly, homotetramer; dimer of dimers.

It is found in the cytoplasm. It catalyses the reaction L-aspartate 4-semialdehyde + pyruvate = (2S,4S)-4-hydroxy-2,3,4,5-tetrahydrodipicolinate + H2O + H(+). It functions in the pathway amino-acid biosynthesis; L-lysine biosynthesis via DAP pathway; (S)-tetrahydrodipicolinate from L-aspartate: step 3/4. Its function is as follows. Catalyzes the condensation of (S)-aspartate-beta-semialdehyde [(S)-ASA] and pyruvate to 4-hydroxy-tetrahydrodipicolinate (HTPA). The protein is 4-hydroxy-tetrahydrodipicolinate synthase of Methanocaldococcus jannaschii (strain ATCC 43067 / DSM 2661 / JAL-1 / JCM 10045 / NBRC 100440) (Methanococcus jannaschii).